Here is a 137-residue protein sequence, read N- to C-terminus: Large ribosomal subunit protein uL16 (137 aa).

The span at 1–17 shows a compositional bias: basic residues; the sequence is MLQPKRTKFRKTHKGRN. Residues 1 to 24 form a disordered region; it reads MLQPKRTKFRKTHKGRNRGLANTG.

It belongs to the universal ribosomal protein uL16 family. Part of the 50S ribosomal subunit.

In terms of biological role, binds 23S rRNA and is also seen to make contacts with the A and possibly P site tRNAs. The polypeptide is Large ribosomal subunit protein uL16 (Aeromonas salmonicida (strain A449)).